The primary structure comprises 206 residues: ATP-dependent dethiobiotin synthetase BioD (206 aa).

12–17 (GVGKTI) contacts ATP. T16 is a Mg(2+) binding site. The active site involves K32. Residues H46 and E98 each contribute to the Mg(2+) site. 98 to 101 (EGAG) provides a ligand contact to ATP.

It belongs to the dethiobiotin synthetase family. As to quaternary structure, homodimer. Mg(2+) serves as cofactor.

It localises to the cytoplasm. It catalyses the reaction (7R,8S)-7,8-diammoniononanoate + CO2 + ATP = (4R,5S)-dethiobiotin + ADP + phosphate + 3 H(+). It participates in cofactor biosynthesis; biotin biosynthesis; biotin from 7,8-diaminononanoate: step 1/2. In terms of biological role, catalyzes a mechanistically unusual reaction, the ATP-dependent insertion of CO2 between the N7 and N8 nitrogen atoms of 7,8-diaminopelargonic acid (DAPA, also called 7,8-diammoniononanoate) to form a ureido ring. In Novosphingobium aromaticivorans (strain ATCC 700278 / DSM 12444 / CCUG 56034 / CIP 105152 / NBRC 16084 / F199), this protein is ATP-dependent dethiobiotin synthetase BioD.